A 350-amino-acid chain; its full sequence is (S)-tetrahydroprotoberberine N-methyltransferase (350 aa).

Positions 91, 129, 153, 157, 179, 180, and 195 each coordinate S-adenosyl-L-methionine. Residue C325 is part of the active site.

The protein belongs to the CFA/CMAS family. Homodimer.

It is found in the cytoplasm. It carries out the reaction (S)-stylopine + S-adenosyl-L-methionine = (S)-cis-N-methylstylopine + S-adenosyl-L-homocysteine. The enzyme catalyses (S)-tetrahydropalmatine + S-adenosyl-L-methionine = (S)-cis-N-methyltetrahydropalmatine + S-adenosyl-L-homocysteine. It catalyses the reaction (S)-canadine + S-adenosyl-L-methionine = (S)-cis-N-methylcanadine + S-adenosyl-L-homocysteine. The catalysed reaction is (S)-scoulerine + S-adenosyl-L-methionine = (S)-cis-N-methylscoulerine + S-adenosyl-L-homocysteine. The protein operates within alkaloid biosynthesis. Its function is as follows. N-methyltransferase with a broad substrate range, accepting protoberberine alkaloids (R,S)-stylopine, (R,S)-nandinine and (R,S)-tetrahydropalmatine, and to a lesser extent (R,S)-canadine, (R,S)-tetrahydrogroenlandicine (cheilanthifoline) and (S)-scoulerine. The chain is (S)-tetrahydroprotoberberine N-methyltransferase from Eschscholzia californica (California poppy).